Here is a 430-residue protein sequence, read N- to C-terminus: L-lysine N6-monooxygenase MbtG (430 aa).

The first 21 residues, 1-21 (MTATLAVIGAGPKAVAVAAKA), serve as a signal peptide directing secretion.

This sequence belongs to the lysine N(6)-hydroxylase/L-ornithine N(5)-oxygenase family. FAD serves as cofactor.

The enzyme catalyses L-lysine + NADPH + O2 = N(6)-hydroxy-L-lysine + NADP(+) + H2O. The protein operates within siderophore biosynthesis; mycobactin biosynthesis. Flavoprotein monooxygenase required for N-hydroxylation of the two acylated lysine residues during mycobactin assembly, thus producing the hydroxamate groups necessary for iron sequestration. Is also able, but less efficiently, to hydroxylate L-lysine (non acylated) in vitro. This is L-lysine N6-monooxygenase MbtG (mbtG) from Mycobacterium sp. (strain MCS).